The following is a 339-amino-acid chain: Exopolyphosphatase 1 (339 aa).

Positions glutamine 315–threonine 339 are disordered. A compositionally biased stretch (basic and acidic residues) spans arginine 319–threonine 339.

Belongs to the GppA/Ppx family. As to quaternary structure, homodimer.

It carries out the reaction [phosphate](n) + H2O = [phosphate](n-1) + phosphate + H(+). In terms of biological role, degradation of inorganic polyphosphates (polyP). Releases orthophosphate processively from the ends of the polyP chain. The sequence is that of Exopolyphosphatase 1 from Mycobacterium leprae (strain TN).